The primary structure comprises 647 residues: Golgi-associated RAB2B interactor protein 3 (647 aa).

A compositionally biased stretch (polar residues) spans 188–202; that stretch reads IPTADTSTETKSTLV. 4 disordered regions span residues 188–220, 267–296, 361–384, and 465–573; these read IPTA…TSQD, TAGA…GSAR, SKSP…QERS, and RDGS…GFVS. Residues 205 to 214 are compositionally biased toward basic and acidic residues; sequence IHGEGDRDSK. Residues 361–378 are compositionally biased toward polar residues; that stretch reads SKSPGSGQVATGLTGTAS. Residue Ser-378 is modified to Phosphoserine. Positions 478–491 are enriched in basic and acidic residues; sequence TQKEKRERRESDRK. Residues 492–501 show a composition bias toward basic residues; the sequence is GSRKSSHHQR. The Bipartite nuclear localization signal signature appears at 494–511; the sequence is RKSSHHQRTGASRHSSSK. The span at 528 to 556 shows a compositional bias: basic and acidic residues; the sequence is KTREDKKEKGRGSLRDQRHSSSYRSESRT. Phosphoserine occurs at positions 634 and 636.

This sequence belongs to the GARIN family. As to quaternary structure, interacts (via N-terminus) with RAB2B (in GTP-bound form). Interacts with FRG1.

The protein resides in the golgi apparatus. It localises to the nucleus. Its subcellular location is the cajal body. Its function is as follows. May be involved in RNA biogenesis. This chain is Golgi-associated RAB2B interactor protein 3 (Garin3), found in Rattus norvegicus (Rat).